A 430-amino-acid polypeptide reads, in one-letter code: Transcriptional regulatory protein RXT2 (430 aa).

The disordered stretch occupies residues 408-430 (EIENTMEDGVVDDNEPDEEANRA).

Belongs to the RXT2 family. Component of the RPD3C(L) complex composed of at least ASH1, CTI6, DEP1, PHO23, RPD3, RXT2, RXT3, SAP30, SDS3, SIN3, UME1 and UME6.

Its subcellular location is the nucleus. Component of the RPD3C(L) histone deacetylase complex (HDAC) responsible for the deacetylation of lysine residues on the N-terminal part of the core histones (H2A, H2B, H3 and H4). Histone deacetylation gives a tag for epigenetic repression and plays an important role in transcriptional regulation, cell cycle progression and developmental events. This chain is Transcriptional regulatory protein RXT2 (RXT2), found in Saccharomyces cerevisiae (strain ATCC 204508 / S288c) (Baker's yeast).